A 325-amino-acid polypeptide reads, in one-letter code: Probable ABC transporter permease YtrD (325 aa).

8 consecutive transmembrane segments (helical) span residues Val-16–Met-36, Ser-63–Ile-83, Met-113–Leu-133, Leu-146–Thr-166, Val-179–Gly-199, Tyr-233–Val-253, Pro-272–Ala-292, and Gly-298–Ile-318.

This sequence belongs to the ABC-5 integral membrane protein family. In terms of assembly, the complex is composed of 2 ATP-binding proteins (YtrB and YtrE), 2 transmembrane proteins (YtrC and YtrD) and a solute-binding protein (YtrF).

The protein localises to the cell membrane. Part of the ABC transporter complex YtrBCDEF that plays a role in acetoin utilization during stationary phase and sporulation. The chain is Probable ABC transporter permease YtrD (ytrD) from Bacillus subtilis (strain 168).